A 141-amino-acid chain; its full sequence is ATP synthase epsilon chain, chloroplastic (141 aa).

The protein belongs to the ATPase epsilon chain family. F-type ATPases have 2 components, F(1) - the catalytic core - and F(0) - the membrane proton channel. F(1) has five subunits: alpha(3), beta(3), gamma(1), delta(1), epsilon(1). F(0) has four main subunits: a(1), b(1), b'(1) and c(10-14). The alpha and beta chains form an alternating ring which encloses part of the gamma chain. F(1) is attached to F(0) by a central stalk formed by the gamma and epsilon chains, while a peripheral stalk is formed by the delta, b and b' chains.

The protein localises to the plastid. The protein resides in the chloroplast thylakoid membrane. Functionally, f(1)F(0) ATP synthase produces ATP from ADP in the presence of a proton or sodium gradient. F-type ATPases consist of two structural domains, F(1) containing the extramembraneous catalytic core and F(0) containing the membrane proton channel, linked together by a central stalk and a peripheral stalk. During catalysis, ATP synthesis in the catalytic domain of F(1) is coupled via a rotary mechanism of the central stalk subunits to proton translocation. In Chlamydomonas reinhardtii (Chlamydomonas smithii), this protein is ATP synthase epsilon chain, chloroplastic.